Consider the following 222-residue polypeptide: Small ribosomal subunit protein uS3 (222 aa).

The KH type-2 domain maps to 39–108 (IRRHIKEKLY…TISLDIKEIK (70 aa)).

It belongs to the universal ribosomal protein uS3 family. In terms of assembly, part of the 30S ribosomal subunit. Forms a tight complex with proteins S10 and S14.

Functionally, binds the lower part of the 30S subunit head. Binds mRNA in the 70S ribosome, positioning it for translation. In Caldicellulosiruptor bescii (strain ATCC BAA-1888 / DSM 6725 / KCTC 15123 / Z-1320) (Anaerocellum thermophilum), this protein is Small ribosomal subunit protein uS3.